The sequence spans 454 residues: OTU domain-containing protein 1 (454 aa).

2 disordered regions span residues 36–64 (QSASPAAAAPEPDTGERPPAAATEPREAA) and 116–257 (LPPP…SRAD). Residues 52-64 (RPPAAATEPREAA) are compositionally biased toward low complexity. Residues 116 to 125 (LPPPSAPSPP) are compositionally biased toward pro residues. 3 stretches are compositionally biased toward basic and acidic residues: residues 151–164 (DAPDRNFRLSEHRQ), 193–210 (GEERRAERSSRGWDRASG), and 219–229 (ALRRQDPEAEA). The OTU domain occupies 282–411 (KYRFHIIPDG…NGHYDAVFDH (130 aa)). The cys-loop stretch occupies residues 287–293 (IIPDGNC). Asp290 is a catalytic residue. Cys293 (nucleophile) is an active-site residue. Positions 342 to 352 (AAQDGAWAGYP) are his-loop. The variable-loop stretch occupies residues 399–404 (WLSNGH). His404 is a catalytic residue. The 20-residue stretch at 430-449 (KRDEELAKSMAISLSKMYIE) folds into the UIM domain.

It carries out the reaction Thiol-dependent hydrolysis of ester, thioester, amide, peptide and isopeptide bonds formed by the C-terminal Gly of ubiquitin (a 76-residue protein attached to proteins as an intracellular targeting signal).. In terms of biological role, deubiquitinating enzyme that specifically hydrolyzes 'Lys-63'-linked polyubiquitin to monoubiquitin. Required for the stability and translation of a subset mRNAs with a high abundance of rare codons by mediating deubiquitination of 40S ribosomal protein RPS10/eS10, thereby antagonizing ZNF598-mediated 40S ubiquitination. The abundance of rare codons in mRNAs can limit the translation rate and can lead to ribosome collisions that trigger activation of ribosome quality control (RQC) pathway by ZNF598. OTUD1-mediated deubiquitination prevents activation of the RQC and subsequent dissociation of ribosomes and stimulates formation of polysomes and translation. The polypeptide is OTU domain-containing protein 1 (Otud1) (Mus musculus (Mouse)).